We begin with the raw amino-acid sequence, 446 residues long: Phosphoglucosamine mutase (446 aa).

Ser103 functions as the Phosphoserine intermediate in the catalytic mechanism. Residues Ser103, Asp242, Asp244, and Asp246 each contribute to the Mg(2+) site. Ser103 carries the phosphoserine modification.

It belongs to the phosphohexose mutase family. Mg(2+) is required as a cofactor. Activated by phosphorylation.

It carries out the reaction alpha-D-glucosamine 1-phosphate = D-glucosamine 6-phosphate. Functionally, catalyzes the conversion of glucosamine-6-phosphate to glucosamine-1-phosphate. The protein is Phosphoglucosamine mutase of Vibrio cholerae serotype O1 (strain ATCC 39541 / Classical Ogawa 395 / O395).